Reading from the N-terminus, the 94-residue chain is Integration host factor subunit beta (94 aa).

Belongs to the bacterial histone-like protein family. As to quaternary structure, heterodimer of an alpha and a beta chain.

In terms of biological role, this protein is one of the two subunits of integration host factor, a specific DNA-binding protein that functions in genetic recombination as well as in transcriptional and translational control. The polypeptide is Integration host factor subunit beta (Histophilus somni (strain 129Pt) (Haemophilus somnus)).